The primary structure comprises 514 residues: Serine--tRNA ligase, cytoplasmic (514 aa).

Met1 bears the N-acetylmethionine mark. Residues 9-61 (RVDKGGDPALIRESQEKRFKDPGLVDQLVKADSEWRRCRFRADNLNKLKNLCS) are interaction with tRNA. Ser241 is modified (phosphoserine). Positions 271 and 302 each coordinate L-serine. ATP-binding positions include 302–304 (RQE) and 318–321 (VHQF). Lys323 carries the N6-acetyllysine modification. Glu325 contributes to the L-serine binding site. Position 391 to 394 (391 to 394 (ELVS)) interacts with ATP. Asn427 provides a ligand contact to L-serine. The disordered stretch occupies residues 475–514 (PIDQEPSKKQKKQHEGSKKKGAARDVALESQLQNMEVTDA). Basic and acidic residues predominate over residues 479-501 (EPSKKQKKQHEGSKKKGAARDVA). The Nuclear localization signal signature appears at 482-494 (KKQKKQHEGSKKK). The segment covering 504-514 (SQLQNMEVTDA) has biased composition (polar residues).

It belongs to the class-II aminoacyl-tRNA synthetase family. Type-1 seryl-tRNA synthetase subfamily. Homodimer. The tRNA molecule may bind across the dimer. Interacts with SIRT2. Interacts with METTL6; interaction is required for the tRNA N(3)-methylcytidine methyltransferase activity of METTL6.

It is found in the cytoplasm. The protein localises to the nucleus. It catalyses the reaction tRNA(Ser) + L-serine + ATP = L-seryl-tRNA(Ser) + AMP + diphosphate + H(+). The enzyme catalyses tRNA(Sec) + L-serine + ATP = L-seryl-tRNA(Sec) + AMP + diphosphate + H(+). Its pathway is aminoacyl-tRNA biosynthesis; selenocysteinyl-tRNA(Sec) biosynthesis; L-seryl-tRNA(Sec) from L-serine and tRNA(Sec): step 1/1. Catalyzes the attachment of serine to tRNA(Ser) in a two-step reaction: serine is first activated by ATP to form Ser-AMP and then transferred to the acceptor end of tRNA(Ser). Is probably also able to aminoacylate tRNA(Sec) with serine, to form the misacylated tRNA L-seryl-tRNA(Sec), which will be further converted into selenocysteinyl-tRNA(Sec). In the nucleus, binds to the VEGFA core promoter and prevents MYC binding and transcriptional activation by MYC. Recruits SIRT2 to the VEGFA promoter, promoting deacetylation of histone H4 at 'Lys-16' (H4K16). Thereby, inhibits the production of VEGFA and sprouting angiogenesis mediated by VEGFA. This chain is Serine--tRNA ligase, cytoplasmic (SARS1), found in Bos taurus (Bovine).